A 526-amino-acid polypeptide reads, in one-letter code: tRNA-2-methylthio-N(6)-dimethylallyladenosine synthase (526 aa).

The 117-residue stretch at 14 to 130 (RTYQVRTYGC…LPTLLERARH (117 aa)) folds into the MTTase N-terminal domain. [4Fe-4S] cluster contacts are provided by cysteine 23, cysteine 59, cysteine 93, cysteine 167, cysteine 171, and cysteine 174. A Radical SAM core domain is found at 153–401 (RESAYAGWVS…IELQERISLE (249 aa)). Positions 404-483 (QAQVGRTLEL…PHHLIADGAL (80 aa)) constitute a TRAM domain.

This sequence belongs to the methylthiotransferase family. MiaB subfamily. In terms of assembly, monomer. It depends on [4Fe-4S] cluster as a cofactor.

It localises to the cytoplasm. It carries out the reaction N(6)-dimethylallyladenosine(37) in tRNA + (sulfur carrier)-SH + AH2 + 2 S-adenosyl-L-methionine = 2-methylsulfanyl-N(6)-dimethylallyladenosine(37) in tRNA + (sulfur carrier)-H + 5'-deoxyadenosine + L-methionine + A + S-adenosyl-L-homocysteine + 2 H(+). Catalyzes the methylthiolation of N6-(dimethylallyl)adenosine (i(6)A), leading to the formation of 2-methylthio-N6-(dimethylallyl)adenosine (ms(2)i(6)A) at position 37 in tRNAs that read codons beginning with uridine. This chain is tRNA-2-methylthio-N(6)-dimethylallyladenosine synthase, found in Mycobacterium sp. (strain JLS).